The chain runs to 163 residues: Neurotrophin-3 (163 aa).

Positions 1-3 are cleaved as a signal peptide; sequence IQS. Residues 4–119 constitute a propeptide that is removed on maturation; that stretch reads TSMDQGILTE…VLNRTSRRKR (116 aa). N-linked (GlcNAc...) asparagine glycosylation occurs at Asn-112.

The protein belongs to the NGF-beta family.

The protein resides in the secreted. Seems to promote the survival of visceral and proprioceptive sensory neurons. The protein is Neurotrophin-3 (NTF3) of Eryx colubrinus colubrinus.